Reading from the N-terminus, the 2109-residue chain is MADSFGFTPMEVLLFGGESVQLLTSDMPIDVQWGFVHSTRCYALWKDDLIHLNPLLKYSQRIAKRWERLVSGFVGPVPLDKLLSLLAKLMRYCVNMGVSVQEIYLSDAIVSSSYMLHVSRSAGCVSFSWLYAKLSMFASCGKFWVGSSHHTAANMIEGSRAVNGPDVAISEMVEAFHLEVKSSLVVTVSLTPREKKILERELGFVPLYKQKSRAPRNHPVLAALREVMRQEYSASCNILNTKLKTLVVGAASREVNCYSSNPSVHYYFANKDSKDLVRTTLELLHSALATKYRNMESGERELMNNLKGCGYIVKRSVENAVYEVVSDKDVAEVLRYAQTVASTKKEAKKKPNTGKRKMVMSEATRRTIELHELSRIVAEEKKIPNHFHFDESDFASVGNFTQLVCEDVGYNFSVDAWLHLFEATGAQTAVGYMALPNELLFEHYPISDYYDYWEGVEKHGSLGGITISPLRNGQVVGMPTGVFQPVHFDKTSAGLGIPGSKMGAAERVICHMSDGLGNGYNHVKSDWQTLLKHPILSSSKYNFAVEVDLTGRYGCLATFRLTRVTGVKYVARTIKLRPEDRYVRVLDLLHIVRSIRLKGHAGLKEPYQYFPVYKREVDTPVSYCFSIAEKSLTVQNIANFIRHHIGGVSLVNKELVSAWRLNPQLVPSFAYAVYFYVVNLRGELDGMLQKLMKKGITWADRLKANVSAFLRDMVDPISFLWTWLFERRLVDQIFQDGTDVFYQMDRACVDEKALRLNDHIKITRDFLPADTLLPEGWSLDDWEKAPDSLKTLSAAASLPVECGAVNCVGKSFKSVRTLLPPSVVTSPVEQFFKSGGKFRDDAEFAELLSAHYRWQMDNSFCACQVCAALTGKTGSQVVECRWKAESMYTFSMSQTEVDDFRNEIKAQSIEKGNRFGEMLIGVHQKIPTQAFEVSVRLEYVKGGPGTGKSFLIRSLADPIRDLVVAPFIKLRSDYQNQRVGDELLSWDFHTPHKALDVTGKQIIFVDEFTAYDWRLLAVLAYRNHAHTIYLVGDEQQTGIQEGRGEGISILNKVDLSKVSTHVPIMNFRNPVRDVKVLNYLFGSRMVPMSSVEKGFSFGDVKEFSSLSNIPDTKIIHYSDETGEHMMPDYVRGVSKTTVRANQGSTYDNVVLPVLPSDLNLINSAELNLVALSRHRNKLTILLDNDGMNIGAVLKGMLEGVPEELERRDYIVGMYLGLHLPIKKEFFFPESEFAKSFRLMVAKYEAFVPYDSNLPTLVLQGDVVVLDIARVENDINDAFNCPDFYNLVSRPNNCLVVAISECLGVTLEKLDNLMQANAVTLDKYHAWLSKKSPSTWQDCRMFADALKVSMYVKVLSDKPYDLTYEVDGAGSSVTLHLVGKESDGHFIAAPLSPSLSTNERESGHDSKKPADDSDTFDAANLFADKGVSSADIEAFCAYLEKTLMATIMEYDLRLQSWANVVDDTDDFYQINISEFRQSTCFGKLLSALEVLKVDVSRKRFISDWLCKNLENKQFRWRWSSSVASTSSAGSNVDDDFVNMAGGKTDANVDPADVLRQSFMDYASEFVPILIAESPILMPLVEPEPILSKCMVPEFDAFLLIKEFDLDNGADEYQCAYLNESVANRVGDKFVSGVLDTDIISPLNLRGHPIAENVKYHSMCVAPAQIYFKRNQWQELQVQQARYLFRKVRNSPSSTQDSVARMVAQLFVSDCLVPNVADTFSASNLWRIMDKAMHDMVTKNYQGQMEEEFTRNAKLYRFQLKDIEKPLKDPETDLAKAGQGILAWSKEAHVKFMVAFRVLNDLLLKSLNSNVVYDNTMSETEFVGKINAAMNIVPDSAINGVIDAAACDSGQGVFTQLIERHIYAALGISDFFLDWYFSFREKYVMQSRYVRAHMSYVKTSGEPGTLLGNTILMGAMLNAMLRGTGPFCMAMKGDDGFKRQANLKINDQMLKLIKKETVLDFKLDLNVPITFCGYALSNGHLFPSVSRKLTKIAAHRFREYKHFCEYQESLRDWIKNLPKDPAVYADFLECNASLSCRNVDDVQRWLDAIISVSRIGREQFMMMFPIREVFMSLPPVEDSLGELSSTKVAVSIGDNVSNVVRKVARVDMKKF.

One can recognise an Alphavirus-like MT domain in the interval 209–421 (KQKSRAPRNH…FSVDAWLHLF (213 aa)). The 153-residue stretch at 911 to 1063 (KGNRFGEMLI…DLSKVSTHVP (153 aa)) folds into the (+)RNA virus helicase ATP-binding domain. The segment at 939 to 1181 (YVKGGPGTGK…SRHRNKLTIL (243 aa)) is helicase. The 151-residue stretch at 1064 to 1214 (IMNFRNPVRD…ERRDYIVGMY (151 aa)) folds into the (+)RNA virus helicase C-terminal domain. The protease stretch occupies residues 1285-1388 (NLVSRPNNCL…KESDGHFIAA (104 aa)). A disordered region spans residues 1390–1411 (LSPSLSTNERESGHDSKKPADD). The span at 1397 to 1410 (NERESGHDSKKPAD) shows a compositional bias: basic and acidic residues.

It belongs to the ssRNA positive-strand viruses RNA-directed RNA polymerase family. In terms of processing, autocatalytically cleaved by the cysteine protease.

It carries out the reaction RNA(n) + a ribonucleoside 5'-triphosphate = RNA(n+1) + diphosphate. The enzyme catalyses ATP + H2O = ADP + phosphate + H(+). Its function is as follows. Is an RNA-dependent RNA polymerase active in viral RNA replication. In terms of biological role, is a methyltransferase active in RNA capping and an RNA helicase. Methyltransferase displays a cytoplasmic capping enzyme activity. This function is necessary since all viral RNAs are synthesized in the cytoplasm, and host capping enzymes are restricted to the nucleus. Helicase region probably exhibits NTPase and RNA unwinding activities. Contains a cysteine protease activity responsible for autocatalytic processing of the 237 kDa protein (Potential). The chain is Replicase from Beta macrocarpa (Beet).